The sequence spans 447 residues: Nacrein (447 aa).

Residues 1–17 (MYLHLTALCVVIPLCYG) form the signal peptide. A glycan (N-linked (GlcNAc...) asparagine) is linked at Asn44. An Alpha-carbonic anhydrase domain is found at 50–446 (AGFSYDRSIC…KNKVTVYKSF (397 aa)). Zn(2+)-binding residues include His149, His151, and His174. Positions 218-329 (DEPDDEECKH…GENGHKHGCR (112 aa)) are disordered. A compositionally biased stretch (basic and acidic residues) spans 224 to 236 (ECKHILKGHHPDN). The span at 237 to 321 (NENGNGDNGN…NNGENGNNGE (85 aa)) shows a compositional bias: low complexity. 27 consecutive repeat copies span residues 242–244 (GDN), 245–247 (GNN), 248–250 (GYN), 251–253 (GDN), 254–256 (GNN), 257–259 (GDN), 260–262 (GNN), 263–265 (SYN), 266–268 (GDN), 269–271 (GNN), 272–274 (GVN), 275–277 (GNN), 278–280 (GYN), 281–283 (GDN), 284–286 (GNN), 287–289 (GDN), 290–292 (GNN), 293–295 (GYN), 296–298 (GDN), 299–301 (GNN), 302–304 (GDN), 305–307 (GNN), 308–310 (GEN), 311–313 (GNN), 314–316 (GEN), 317–318 (GN), and 320–322 (GEN). The segment at 242–322 (GDNGNNGYNG…NGENGNNGEN (81 aa)) is 27 X 3 AA approximate tandem repeats of G-X-N. N-linked (GlcNAc...) asparagine glycosylation is present at Asn261. Position 387-388 (387-388 (TT)) interacts with substrate.

It belongs to the alpha-carbonic anhydrase family. As to quaternary structure, homooligomer; disulfide-linked. May also be disulfide-linked to insoluble organic matrix. Zn(2+) serves as cofactor. Post-translationally, N-glycosylated. As to expression, expressed at whole regions of the mantle epithelium tissue. Is found in the aragonitic nacreous and calcitic prismatic and foliated layers.

It localises to the secreted. It is found in the extracellular space. Its subcellular location is the extracellular matrix. The enzyme catalyses hydrogencarbonate + H(+) = CO2 + H2O. Functionally, acts as a negative regulator for calcification in the shells of mollusks. May function both as a calcium concentrator and as a carbonic anhydrase required for production of carbonate ions, which are assembled to CaCO(3) at mineralization sites. Is important for shell formation in both the calcitic prismatic layer and the aragonitic nacreous layer. The polypeptide is Nacrein (Pinctada fucata (Akoya pearl oyster)).